The chain runs to 527 residues: V-set and immunoglobulin domain-containing protein 10 (527 aa).

The signal sequence occupies residues 1–13 (MWTRRWIQFLVLC). Ig-like C2-type domains lie at 14–111 (LHLW…LKVS), 123–212 (PTRT…RQLL), 216–306 (PPIT…CQIQ), and 310–399 (PLLE…KEIN). Over 23 to 409 (YLGVFRGDVN…VWLTVNKPHN (387 aa)) the chain is Extracellular. N32, N41, N52, N64, N74, N90, N129, N139, N191, N206, N226, N260, N276, N325, N346, and N375 each carry an N-linked (GlcNAc...) asparagine glycan. C144 and C194 are joined by a disulfide. Cysteines 238 and 288 form a disulfide. A disulfide bridge links C330 with C387. The chain crosses the membrane as a helical span at residues 410-430 (IVGLVTALLLLFLLVVAIITG). Residues 431-527 (TVLYCDPQIY…TGEENQNEEI (97 aa)) are Cytoplasmic-facing. The segment at 501–527 (RPPESTSSDLFSEVSDDTGEENQNEEI) is disordered. The span at 514–527 (VSDDTGEENQNEEI) shows a compositional bias: acidic residues.

It is found in the membrane. The chain is V-set and immunoglobulin domain-containing protein 10 (vsig10) from Xenopus laevis (African clawed frog).